The sequence spans 87 residues: Large ribosomal subunit protein bL27 (87 aa).

The segment at 1–21 (MAHKKGQGSTQNNRDSAGRRL) is disordered.

It belongs to the bacterial ribosomal protein bL27 family.

The chain is Large ribosomal subunit protein bL27 from Nautilia profundicola (strain ATCC BAA-1463 / DSM 18972 / AmH).